The following is a 329-amino-acid chain: Vacuolar protein sorting-associated protein 26B-like (329 aa).

The protein belongs to the VPS26 family.

The protein resides in the cytoplasm. It localises to the membrane. In terms of biological role, probable component of the retromer complex, a complex required to retrieve lysosomal enzyme receptors (IGF2R and M6PR) from endosomes to the trans-Golgi network. The polypeptide is Vacuolar protein sorting-associated protein 26B-like (vps26bl) (Danio rerio (Zebrafish)).